Consider the following 377-residue polypeptide: uncharacterized protein (377 aa).

2 stretches are compositionally biased toward polar residues: residues 1 to 11 (MSSIQGTSGSS) and 31 to 43 (PSGQTISFSAVGK). 3 disordered regions span residues 1–43 (MSSI…AVGK), 109–141 (SSEEQLESPGVRNKSALKGTNRSNSHREEIARN), and 328–377 (SSSP…RGFQ). Residues 334–345 (EDPRSLRDRLRD) are compositionally biased toward basic and acidic residues.

The protein belongs to the chlamydial CPn_0499/CT_392/TC_0671 family.

This is an uncharacterized protein from Chlamydia trachomatis serovar D (strain ATCC VR-885 / DSM 19411 / UW-3/Cx).